A 232-amino-acid polypeptide reads, in one-letter code: Polycomb group RING finger protein 5-B (232 aa).

An RING-type zinc finger spans residues 18 to 57 (CFVCKGYLIKPTTVTECLHTFCKSCIVQHFEDSNDCPKCG). The segment covering 93-104 (QEDEFWRRKESN) has biased composition (basic and acidic residues). A disordered region spans residues 93-128 (QEDEFWRRKESNDENGPMCKKRRVDEEDDDKGDGDY).

In terms of assembly, component of a PRC1-like complex.

It localises to the nucleus. In terms of biological role, component of Polycomb group (PcG) multiprotein complexes; the complex class is required to maintain the transcriptionally repressive state of some genes. The chain is Polycomb group RING finger protein 5-B (pcgf5b) from Danio rerio (Zebrafish).